The chain runs to 510 residues: Probable serine/threonine-protein kinase 2 (510 aa).

The Protein kinase domain maps to 111–364; that stretch reads YVLNKKIGKG…ALQALGHQWF (254 aa). ATP contacts are provided by residues 117 to 125 and Lys140; that span reads IGKGSFSTA. Asp230 acts as the Proton acceptor in catalysis. The disordered stretch occupies residues 408 to 428; it reads NDDIYNNNNNNNQLDPNKNHK.

The protein belongs to the protein kinase superfamily. Ser/Thr protein kinase family.

It localises to the membrane. It catalyses the reaction L-seryl-[protein] + ATP = O-phospho-L-seryl-[protein] + ADP + H(+). It carries out the reaction L-threonyl-[protein] + ATP = O-phospho-L-threonyl-[protein] + ADP + H(+). The protein is Probable serine/threonine-protein kinase 2 (PK2) of Plasmodium falciparum (isolate K1 / Thailand).